The primary structure comprises 89 residues: Defensin-like protein 78 (89 aa).

The first 30 residues, 1-30 (MANNMVASPYKNTFMMIALVLILLISGSEA), serve as a signal peptide directing secretion. Intrachain disulfides connect C40-C75, C44-C67, C52-C73, and C56-C74.

Belongs to the DEFL family.

The protein resides in the secreted. This chain is Defensin-like protein 78, found in Arabidopsis thaliana (Mouse-ear cress).